The chain runs to 147 residues: Ponticulin-like protein C5 (147 aa).

A signal peptide spans 1–20; that stretch reads MKLNNSLLLLIVAIIASSNA. N118 carries the GPI-like-anchor amidated asparagine lipid modification. N118 carries N-linked (GlcNAc...) asparagine glycosylation. A propeptide spans 119–147 (removed in mature form); the sequence is SSESDSSDSTRIGASFALFALALLSMLAL.

The protein belongs to the ponticulin family. The GPI-like-anchor contains a phosphoceramide group, rather than a phosphatidyl group.

It is found in the cell membrane. In Dictyostelium discoideum (Social amoeba), this protein is Ponticulin-like protein C5 (ponC5).